Here is an 860-residue protein sequence, read N- to C-terminus: Nuclear pore complex protein NUP93B (860 aa).

Belongs to the nucleoporin interacting component (NIC) family. Part of the nuclear pore complex (NPC). The NPC has an eight-fold symmetrical structure comprising a central transport channel and two rings, the cytoplasmic and nuclear rings, to which eight filaments are attached. The cytoplasmic filaments have loose ends, while the nuclear filaments are joined in a distal ring, forming a nuclear basket. NPCs are highly dynamic in configuration and composition, and can be devided in 3 subcomplexes, the NUP62 subcomplex, the NUP107-160 subcomplex and the NUP93 subcomplex, containing approximately 30 different nucleoporin proteins.

It is found in the nucleus envelope. Its subcellular location is the nucleus. The protein localises to the nuclear pore complex. The sequence is that of Nuclear pore complex protein NUP93B from Arabidopsis thaliana (Mouse-ear cress).